The primary structure comprises 394 residues: Mannosyl-3-phosphoglycerate synthase (394 aa).

The protein belongs to the glycosyltransferase 2 family. It depends on Mg(2+) as a cofactor.

It is found in the cytoplasm. It carries out the reaction (2R)-3-phosphoglycerate + GDP-alpha-D-mannose = 2-O-(alpha-D-mannosyl)-3-phosphoglycerate + GDP + H(+). The protein operates within carbohydrate biosynthesis; 2-(alpha-D-mannosyl)-D-glycerate biosynthesis; 2-(alpha-D-mannosyl)-D-glycerate from GDP-alpha-D-mannose (MPG route): step 1/2. In terms of biological role, transfers a mannosyl group from GDP-mannose to phosphoglycerate to form mannosyl-3-phosphoglycerate (MPG). The enzyme is absolutely specific for GDP-mannose and 3-phosphoglycerate, and transfers the mannosyl group with retention of configuration. This is Mannosyl-3-phosphoglycerate synthase (mngA) from Pyrococcus horikoshii (strain ATCC 700860 / DSM 12428 / JCM 9974 / NBRC 100139 / OT-3).